A 173-amino-acid chain; its full sequence is NADH-ubiquinone oxidoreductase chain 6 (173 aa).

The next 5 helical transmembrane spans lie at 1–21, 27–47, 48–68, 87–107, and 139–159; these read MTYFMLFLGLCFVLGGLGVAS, YGVVGLVLASVVGCGWLLSLG, VSFVSLVLFMVYLGGMLVVFV, VVGYGVSFIAVLVVGVVIGGL, and CGVGMFLVAGWGLLLTLFVVL.

It belongs to the complex I subunit 6 family.

It is found in the mitochondrion membrane. It carries out the reaction a ubiquinone + NADH + 5 H(+)(in) = a ubiquinol + NAD(+) + 4 H(+)(out). Its function is as follows. Core subunit of the mitochondrial membrane respiratory chain NADH dehydrogenase (Complex I) that is believed to belong to the minimal assembly required for catalysis. Complex I functions in the transfer of electrons from NADH to the respiratory chain. The immediate electron acceptor for the enzyme is believed to be ubiquinone. The protein is NADH-ubiquinone oxidoreductase chain 6 (MT-ND6) of Synthliboramphus hypoleucus (Guadalupe murrelet).